Reading from the N-terminus, the 315-residue chain is Aspartate carbamoyltransferase catalytic subunit (315 aa).

Positions 54 and 55 each coordinate carbamoyl phosphate. Lysine 82 lines the L-aspartate pocket. The carbamoyl phosphate site is built by arginine 104, histidine 134, and glutamine 137. Positions 174 and 229 each coordinate L-aspartate. Positions 270 and 271 each coordinate carbamoyl phosphate.

It belongs to the aspartate/ornithine carbamoyltransferase superfamily. ATCase family. In terms of assembly, heterododecamer (2C3:3R2) of six catalytic PyrB chains organized as two trimers (C3), and six regulatory PyrI chains organized as three dimers (R2).

It catalyses the reaction carbamoyl phosphate + L-aspartate = N-carbamoyl-L-aspartate + phosphate + H(+). The protein operates within pyrimidine metabolism; UMP biosynthesis via de novo pathway; (S)-dihydroorotate from bicarbonate: step 2/3. Catalyzes the condensation of carbamoyl phosphate and aspartate to form carbamoyl aspartate and inorganic phosphate, the committed step in the de novo pyrimidine nucleotide biosynthesis pathway. In Leifsonia xyli subsp. xyli (strain CTCB07), this protein is Aspartate carbamoyltransferase catalytic subunit.